Reading from the N-terminus, the 259-residue chain is TCF3 fusion partner homolog (259 aa).

2 disordered regions span residues 50–72 (GGLGDSGLRERDEEEEAARGRRR) and 141–210 (EDDG…APVQ). At serine 167 the chain carries Phosphoserine. Positions 167 to 178 (SPSQRTTATLDP) are enriched in polar residues. The residue at position 172 (threonine 172) is a Phosphothreonine. Phosphoserine is present on residues serine 180 and serine 188. Threonine 203 bears the Phosphothreonine mark. Lysine 222 participates in a covalent cross-link: Glycyl lysine isopeptide (Lys-Gly) (interchain with G-Cter in SUMO2). Serine 255 is subject to Phosphoserine.

Interacts with NOL3; translocates NOL3 into the nucleus and negatively regulated TFPT-induced cell death. Component of the chromatin remodeling INO80 complex; specifically part of a complex module associated with the N-terminus of INO80.

It localises to the nucleus. Appears to promote apoptosis in a p53/TP53-independent manner. In terms of biological role, putative regulatory component of the chromatin remodeling INO80 complex which is involved in transcriptional regulation, DNA replication and probably DNA repair. This Mus musculus (Mouse) protein is TCF3 fusion partner homolog (Tfpt).